The chain runs to 188 residues: Pro-FMRFamide-related neuropeptide VF (188 aa).

Residues 1–26 (MEIISLKRFILLTVATSSFLTSNTFC) form the signal peptide. Residues 27-57 (TDEFMMPHFHSKEGDGKYSQLRGIPKGEKER) constitute a propeptide that is removed on maturation. Position 94 is a phenylalanine amide (Phe-94). The propeptide occupies 97-106 (TIDEKRSPAA). Disordered regions lie at residues 116–144 (SHFP…QKPL) and 163–188 (IQSP…KPEK). Phe-125 carries the post-translational modification Phenylalanine amide. The propeptide occupies 128–188 (TTARSPKTPA…TDDAERKPEK (61 aa)).

It belongs to the FARP (FMRFamide related peptide) family.

It is found in the secreted. Its function is as follows. Efficiently inhibits forskolin-induced production of cAMP. Acts as a potent negative regulator of gonadotropin synthesis and secretion. Induces secretion of prolactin. Functionally, efficiently inhibits forskolin-induced production of cAMP. Blocks morphine-induced analgesia. The protein is Pro-FMRFamide-related neuropeptide VF (Npvf) of Mus musculus (Mouse).